We begin with the raw amino-acid sequence, 183 residues long: Ras-related protein Rap-2c (183 aa).

10–17 (GSGGVGKS) serves as a coordination point for GTP. The Effector region signature appears at 32 to 40 (YDPTIEDFY). GTP is bound by residues 57 to 61 (DTAGT) and 116 to 119 (NKVD). S-palmitoyl cysteine attachment occurs at residues Cys-176 and Cys-177. At Cys-180 the chain carries Cysteine methyl ester. Cys-180 carries S-geranylgeranyl cysteine lipidation. Residues 181-183 (VVQ) constitute a propeptide, removed in mature form.

The protein belongs to the small GTPase superfamily. Ras family. In terms of processing, palmitoylated. Palmitoylation is required for association with recycling endosome membranes and activation of TNIK.

The protein localises to the cytoplasm. Its subcellular location is the recycling endosome membrane. It carries out the reaction GTP + H2O = GDP + phosphate + H(+). In terms of biological role, small GTP-binding protein which cycles between a GDP-bound inactive and a GTP-bound active form. May play a role in cytoskeletal rearrangements and regulate cell spreading through activation of the effector TNIK. May play a role in SRE-mediated gene transcription. This is Ras-related protein Rap-2c (RAP2C) from Bos taurus (Bovine).